The sequence spans 1166 residues: Poly [ADP-ribose] polymerase tankyrase-2 (1166 aa).

4 ANK repeats span residues 23–52 (PSAR…VNSR), 57–86 (RKST…NVQA), 90–119 (GGLI…DPNA), and 123–152 (WNYT…EPTI). A (3S)-3-hydroxyasparagine; by HIF1AN modification is found at N203. 7 ANK repeats span residues 210 to 239 (RKST…DVHA), 243 to 272 (GDLV…CVNA), 276 to 305 (WQFT…DPTL), 363 to 395 (THET…NTNE), 399 to 428 (EFLT…KVNA), 432 to 461 (LGQT…DPNI), and 463 to 489 (SLQG…SLGH). H238 bears the (3S)-3-hydroxyhistidine; by HIF1AN mark. A (3S)-3-hydroxyasparagine; by HIF1AN modification is found at N271. A (3S)-3-hydroxyasparagine; by HIF1AN modification is found at N427. N518 carries the post-translational modification (3S)-3-hydroxyasparagine; by HIF1AN. ANK repeat units lie at residues 525–554 (RQST…DVHA), 558–587 (GGLV…VVNV), 591–620 (WKFT…DPTK), and 624–652 (DGNT…LLDA). The HIF1AN-binding stretch occupies residues 545-553 (LLQHGADVH). A (3S)-3-hydroxyhistidine; by HIF1AN modification is found at H553. Residue N586 is modified to (3S)-3-hydroxyasparagine; by HIF1AN. 3 positions are modified to (3S)-3-hydroxyasparagine; by HIF1AN: N671, N706, and N739. ANK repeat units follow at residues 678–707 (RHST…DVNA), 711–740 (GGLI…CVNA), and 744–773 (WAFT…DPTL). Residues 873-936 (GIDFSITQFI…IKGVERLISG (64 aa)) form the SAM domain. One can recognise a PARP catalytic domain in the interval 959-1164 (SPDDKEFQSV…YQIVRPEGMV (206 aa)). Residues C1081, H1084, C1089, and C1092 each coordinate Zn(2+).

The protein belongs to the ARTD/PARP family. Oligomerizes and associates with TNKS. Interacts with the cytoplasmic domain of LNPEP/Otase in SLC2A4/GLUT4-vesicles. Binds to the N-terminus of Grb14 and TRF1 with its ankyrin repeat region. Interacts with HIF1AN. Interacts with RNF146; this interaction leads to ubiquitination and proteasomal degradation. Interacts with NUMA1. In terms of processing, ubiquitinated by RNF146 when auto-poly-ADP-ribosylated, leading to its degradation. Deubiquitinated by USP25; leading to stabilization. ADP-ribosylated (-auto). Poly-ADP-ribosylated protein is recognized by RNF146, followed by ubiquitination.

Its subcellular location is the cytoplasm. The protein resides in the golgi apparatus membrane. It is found in the nucleus. The protein localises to the chromosome. It localises to the telomere. It catalyses the reaction NAD(+) + (ADP-D-ribosyl)n-acceptor = nicotinamide + (ADP-D-ribosyl)n+1-acceptor + H(+).. The enzyme catalyses L-aspartyl-[protein] + NAD(+) = 4-O-(ADP-D-ribosyl)-L-aspartyl-[protein] + nicotinamide. It carries out the reaction L-glutamyl-[protein] + NAD(+) = 5-O-(ADP-D-ribosyl)-L-glutamyl-[protein] + nicotinamide. In terms of biological role, poly-ADP-ribosyltransferase involved in various processes such as Wnt signaling pathway, telomere length and vesicle trafficking. Acts as an activator of the Wnt signaling pathway by mediating poly-ADP-ribosylation of AXIN1 and AXIN2, 2 key components of the beta-catenin destruction complex: poly-ADP-ribosylated target proteins are recognized by RNF146, which mediates their ubiquitination and subsequent degradation. Also mediates poly-ADP-ribosylation of BLZF1 and CASC3, followed by recruitment of RNF146 and subsequent ubiquitination. Mediates poly-ADP-ribosylation of TERF1, thereby contributing to the regulation of telomere length. Stimulates 26S proteasome activity. This Mus musculus (Mouse) protein is Poly [ADP-ribose] polymerase tankyrase-2.